The sequence spans 358 residues: Histamine H2 receptor (358 aa).

At 1 to 22 (MEPNGTVHSCCLDSMALKVTIS) the chain is on the extracellular side. N-linked (GlcNAc...) asparagine glycosylation is present at N4. The helical transmembrane segment at 23–44 (VVLTTLILITIAGNVVVCLAVS) threads the bilayer. The Cytoplasmic portion of the chain corresponds to 45-57 (LNRRLRSLTNCFI). A helical membrane pass occupies residues 58–81 (VSLAATDLLLGLLVLPFSAIYQLS). Residues 82–92 (FTWSFGHVFCN) are Extracellular-facing. C91 and C173 are oxidised to a cystine. Residues 93 to 114 (IYTSLDVMLCTASILNLFMISL) traverse the membrane as a helical segment. Topologically, residues 115–134 (DRYCAVTDPLRYPVLVTPVR) are cytoplasmic. A helical transmembrane segment spans residues 135-159 (VAISLVFIWVISITLSFLSIHLGWN). Residues 160–179 (SRNGTRGGNDTFKCKVQVNE) lie on the Extracellular side of the membrane. A helical membrane pass occupies residues 180-203 (VYGLVDGLVTFYLPLLIMCVTYYR). The Cytoplasmic segment spans residues 204–233 (IFKIAREQAKRINHISSWKAATIREHKATV). A helical membrane pass occupies residues 234–257 (TLAAVMGAFIICWFPYFTAFVYRG). Residues 258–266 (LRGDDAINE) are Extracellular-facing. Residues 267-288 (AVEGIVLWLGYANSALNPILYA) form a helical membrane-spanning segment. Topologically, residues 289–358 (ALNRDFRTAY…LTHPQGNPIR (70 aa)) are cytoplasmic. C304 is lipidated: S-palmitoyl cysteine.

It belongs to the G-protein coupled receptor 1 family.

The protein localises to the cell membrane. The H2 subclass of histamine receptors mediates gastric acid secretion. The activity of this receptor is mediated by G proteins which activate adenylyl cyclase. This chain is Histamine H2 receptor (Hrh2), found in Rattus norvegicus (Rat).